The sequence spans 207 residues: MDNEKGLLIVLSGPSGVGKGTVRKEIFDDPTTSYKYSVSMTTRNMREGEVDGVDYFFKTKEEFEALIQEDQFIEYAEYVGNYYGTPVQYVKDTMAAGHDVFLEIEVEGAKQVRKKFPDALFIFLAPPSLDHLKERLVGRGTESDEKIQSRVNEARKEVEMMNLYDYVVVNDEVHLAKERIQSIVEAEHLKRERVEAIYRKMLLEAKK.

A Guanylate kinase-like domain is found at 6–185 (GLLIVLSGPS…AKERIQSIVE (180 aa)). Residue 13–20 (GPSGVGKG) coordinates ATP.

This sequence belongs to the guanylate kinase family.

It is found in the cytoplasm. It catalyses the reaction GMP + ATP = GDP + ADP. Functionally, essential for recycling GMP and indirectly, cGMP. This is Guanylate kinase from Staphylococcus haemolyticus (strain JCSC1435).